Reading from the N-terminus, the 99-residue chain is Protein Frey (99 aa).

A helical transmembrane segment spans residues 7–29 (GALYPRAGLSLFLLYLVLAAVLL). The tract at residues 65-88 (PKHPWPRGPRPLLSRAQQRKRDGP) is disordered.

In terms of assembly, interacts with SPPL2C (via active sites); the interaction stabilizes FREY1 protein and inhibits SPPL2C proteolytic activity. Interacts with IZUMO1; the interaction retains IZUMO1 at the endoplasmic reticulum membrane and coordinates IZUMO1 complex assembly.

The protein localises to the endoplasmic reticulum membrane. Key regulator for male fertility expressed transiently in round spermatids where it recruits IZUMO1 at the endoplasmic reticulum (ER) membrane and coordinates the oolemmal binding multimeric complex (IZUMO1 complex) assembly. Upon complete assembly of the IZUMO1 complex, its ER retention is released, facilitating IZUMO1 complex export to the acrosome. Through the interaction with SPPL2C, inhibits its intramembrane protease activity directly accessing the catalytic center of an I-CLiP. This Ailuropoda melanoleuca (Giant panda) protein is Protein Frey.